The following is a 142-amino-acid chain: Transcriptional regulator MraZ (142 aa).

SpoVT-AbrB domains follow at residues 5–47 (EYPY…PLAS) and 76–119 (ANKA…NPGR).

This sequence belongs to the MraZ family. In terms of assembly, forms oligomers.

It is found in the cytoplasm. The protein localises to the nucleoid. This chain is Transcriptional regulator MraZ, found in Deinococcus deserti (strain DSM 17065 / CIP 109153 / LMG 22923 / VCD115).